A 21-amino-acid polypeptide reads, in one-letter code: LDEFRVYSDDANKYKISIPQD.

Its subcellular location is the plastid. It is found in the chloroplast thylakoid lumen. This chain is Thylakoid lumenal 13.8 kDa protein, found in Spinacia oleracea (Spinach).